A 774-amino-acid chain; its full sequence is E3 ubiquitin-protein ligase RFWD3 (774 aa).

Phosphoserine; by ATM and ATR is present on residues serine 46 and serine 63. Disordered regions lie at residues 95–116 (NPRT…PASS), 139–225 (PSSS…AEYG), and 257–280 (GGKT…ASMD). Positions 106-116 (SDGNHTIPASS) are enriched in polar residues. Residues 150–162 (RTRRRVSASRRAR) show a composition bias toward basic residues. The span at 211-221 (SSSSDSDSDSS) shows a compositional bias: low complexity. Residues 287 to 331 (CTICLEQWTNAGDHRLSALRCGHLFGYRCISTWLKGQVRKCPQCN) form an RING-type; degenerate zinc finger. Positions 361–413 (SLLKEQMLRKQAELESAQCRLQLQVLTDKCTRLQRRVQDLQKLTSHQSQNLQQ) form a coiled coil. WD repeat units follow at residues 495–537 (MHGK…QTYN), 539–577 (GRPV…SHVQ), and 583–628 (KARC…SHWP).

As to quaternary structure, interacts with MDM2 and p53/TP53. Binds to the RPA complex via direct interaction with RPA2. Interacts with RAD51. Post-translationally, phosphorylated at Ser-46 and Ser-63 upon DNA damage by ATM or ATR. ATM phosphorylation occurs at early times upon DNA damage, while ATR is the major kinase at later times. Phosphorylation by ATM and ATR is required to stabilize p53/TP53. Part of the phosphorylation depends upon RPA2 presence.

The protein localises to the nucleus. It is found in the PML body. The protein resides in the cytoplasm. It carries out the reaction S-ubiquitinyl-[E2 ubiquitin-conjugating enzyme]-L-cysteine + [acceptor protein]-L-lysine = [E2 ubiquitin-conjugating enzyme]-L-cysteine + N(6)-ubiquitinyl-[acceptor protein]-L-lysine.. It functions in the pathway protein modification; protein ubiquitination. Functionally, E3 ubiquitin-protein ligase required for the repair of DNA interstrand cross-links (ICL) in response to DNA damage. Plays a key role in RPA-mediated DNA damage signaling and repair. Acts by mediating ubiquitination of the RPA complex (RPA1, RPA2 and RPA3 subunits) and RAD51 at stalled replication forks, leading to remove them from DNA damage sites and promote homologous recombination. Also mediates the ubiquitination of p53/TP53 in the late response to DNA damage, and acts as a positive regulator of p53/TP53 stability, thereby regulating the G1/S DNA damage checkpoint. May act by catalyzing the formation of short polyubiquitin chains on p53/TP53 that are not targeted to the proteasome. In response to ionizing radiation, interacts with MDM2 and enhances p53/TP53 ubiquitination, possibly by restricting MDM2 from extending polyubiquitin chains on ubiquitinated p53/TP53. Required to translesion DNA synthesis across DNA-protein cross-link adducts by catalyzing ubiquitination of proteins on single-stranded DNA (ssDNA). This Homo sapiens (Human) protein is E3 ubiquitin-protein ligase RFWD3.